A 551-amino-acid polypeptide reads, in one-letter code: Steroid transmembrane transporter SLC22A24 (551 aa).

12 helical membrane passes run 16 to 36, 146 to 166, 174 to 194, 204 to 222, 235 to 255, 260 to 280, 350 to 370, 378 to 398, 410 to 430, 435 to 455, 469 to 489, and 496 to 516; these read FQIL…PHTV, SVAK…GGHL, FIVT…AFAP, FLTG…LLIL, ALIF…AFGI, HLQL…RWLS, ICLL…LLIN, VFLL…LGNF, IIFM…TQEM, LVLA…TAVL, LGVI…LMIL, and LPWI…LLLP. The interval 524–551 is disordered; sequence PDSIQDVENKRKSSREVKKDAVAKVTPF. Residues 530–545 show a composition bias toward basic and acidic residues; sequence VENKRKSSREVKKDAV.

As to expression, localized to the kidney. Mainly expressed in the late segments of proximal tubules.

The protein localises to the cell membrane. The enzyme catalyses estrone 3-sulfate(out) + glutarate(in) = estrone 3-sulfate(in) + glutarate(out). The catalysed reaction is 17beta-estradiol 17-O-(beta-D-glucuronate)(out) + glutarate(in) = 17beta-estradiol 17-O-(beta-D-glucuronate)(in) + glutarate(out). It catalyses the reaction dehydroepiandrosterone 3-sulfate(out) + glutarate(in) = dehydroepiandrosterone 3-sulfate(in) + glutarate(out). In terms of biological role, renal transmembrane organic anion/dicarboxylate exchanger that participates in the reabsorption of conjugated steroids, as well as bile acids, driven by an outward gradient of dicarboxylates such as glutarate or succinate. Transports estrone 3-sulfate and estradiol-17-glucuronide (17beta-estradiol 17-O-(beta-D-glucuronate)), but not androstanediol glucuronide (5alpha-androstane-3alpha,17beta-diol 3-O-(beta-D-glucuronate)), nor taurocholate. Prefers sulfate conjugates of steroids rather than glucuronide conjugates. This chain is Steroid transmembrane transporter SLC22A24, found in Rattus norvegicus (Rat).